Reading from the N-terminus, the 565-residue chain is Effector protease OspD3 (565 aa).

It belongs to the Toxin_15 family.

It is found in the secreted. Its function is as follows. Effector protease that disrupts necroptosis in host cells by mediating proteolytic cleavage of host RIPK1 and RIPK3. The chain is Effector protease OspD3 from Shigella flexneri.